Here is a 369-residue protein sequence, read N- to C-terminus: Fructose-bisphosphate aldolase 2 (369 aa).

A dihydroxyacetone phosphate-binding site is contributed by aspartate 40. D-glyceraldehyde 3-phosphate-binding residues include serine 42 and threonine 45. Arginine 49 lines the beta-D-fructose 1,6-bisphosphate pocket. Lysine 113 serves as a coordination point for D-glyceraldehyde 3-phosphate. Residue lysine 152 participates in dihydroxyacetone phosphate binding. Residue glutamate 195 participates in D-glyceraldehyde 3-phosphate binding. Catalysis depends on glutamate 195, which acts as the Proton acceptor. 3 residues coordinate dihydroxyacetone phosphate: lysine 237, serine 279, and glycine 280. Residue lysine 237 is the Schiff-base intermediate with dihydroxyacetone phosphate of the active site. Beta-D-fructose 1,6-bisphosphate contacts are provided by residues 279-281 and serine 307; that span reads SGG. Glycine 309 and arginine 310 together coordinate dihydroxyacetone phosphate. Arginine 310 contacts beta-D-fructose 1,6-bisphosphate.

The protein belongs to the class I fructose-bisphosphate aldolase family.

Its subcellular location is the cytoplasm. It localises to the membrane. The protein localises to the host cell membrane. The enzyme catalyses beta-D-fructose 1,6-bisphosphate = D-glyceraldehyde 3-phosphate + dihydroxyacetone phosphate. It participates in carbohydrate degradation; glycolysis; D-glyceraldehyde 3-phosphate and glycerone phosphate from D-glucose: step 4/4. Plays a key role in glycolysis by catalyzing the cleavage of fructose 1,6-bisphosphate into dihydroxyacetone phosphate and glyceraldehyde 3-phosphate. The protein is Fructose-bisphosphate aldolase 2 (ALDO2) of Plasmodium berghei (strain Anka).